The chain runs to 331 residues: Ketol-acid reductoisomerase (NADP(+)) (331 aa).

Residues 4 to 183 (ATIYYDDDAE…GCTRAGVVET (180 aa)) form the KARI N-terminal Rossmann domain. NADP(+) is bound by residues 27–30 (YGSQ), arginine 50, serine 53, serine 55, and 85–88 (DTVQ). Histidine 109 is an active-site residue. Position 135 (glycine 135) interacts with NADP(+). The region spanning 184-329 (TFREETETDL…EDLRALFAWG (146 aa)) is the KARI C-terminal knotted domain. Aspartate 192, glutamate 196, glutamate 228, and glutamate 232 together coordinate Mg(2+). Serine 253 contributes to the substrate binding site.

It belongs to the ketol-acid reductoisomerase family. Requires Mg(2+) as cofactor.

It carries out the reaction (2R)-2,3-dihydroxy-3-methylbutanoate + NADP(+) = (2S)-2-acetolactate + NADPH + H(+). The catalysed reaction is (2R,3R)-2,3-dihydroxy-3-methylpentanoate + NADP(+) = (S)-2-ethyl-2-hydroxy-3-oxobutanoate + NADPH + H(+). The protein operates within amino-acid biosynthesis; L-isoleucine biosynthesis; L-isoleucine from 2-oxobutanoate: step 2/4. It functions in the pathway amino-acid biosynthesis; L-valine biosynthesis; L-valine from pyruvate: step 2/4. Its function is as follows. Involved in the biosynthesis of branched-chain amino acids (BCAA). Catalyzes an alkyl-migration followed by a ketol-acid reduction of (S)-2-acetolactate (S2AL) to yield (R)-2,3-dihydroxy-isovalerate. In the isomerase reaction, S2AL is rearranged via a Mg-dependent methyl migration to produce 3-hydroxy-3-methyl-2-ketobutyrate (HMKB). In the reductase reaction, this 2-ketoacid undergoes a metal-dependent reduction by NADPH to yield (R)-2,3-dihydroxy-isovalerate. In Natronomonas pharaonis (strain ATCC 35678 / DSM 2160 / CIP 103997 / JCM 8858 / NBRC 14720 / NCIMB 2260 / Gabara) (Halobacterium pharaonis), this protein is Ketol-acid reductoisomerase (NADP(+)).